A 189-amino-acid polypeptide reads, in one-letter code: Transcription factor FapR (189 aa).

Belongs to the FapR family.

Functionally, transcriptional factor involved in regulation of membrane lipid biosynthesis by repressing genes involved in fatty acid and phospholipid metabolism. This chain is Transcription factor FapR, found in Listeria monocytogenes serotype 4a (strain HCC23).